The primary structure comprises 510 residues: D-alanine--D-alanyl carrier protein ligase (510 aa).

157–158 is a binding site for ATP; that stretch reads TS. Asp202 serves as a coordination point for D-alanine. ATP is bound at residue 297 to 302; the sequence is NTYGPT. A D-alanine-binding site is contributed by Val306. Residues Asp389 and Lys498 each coordinate ATP. Lys498 lines the D-alanine pocket.

This sequence belongs to the ATP-dependent AMP-binding enzyme family. DltA subfamily.

The protein resides in the cytoplasm. It carries out the reaction holo-[D-alanyl-carrier protein] + D-alanine + ATP = D-alanyl-[D-alanyl-carrier protein] + AMP + diphosphate. It participates in cell wall biogenesis; lipoteichoic acid biosynthesis. Its function is as follows. Catalyzes the first step in the D-alanylation of lipoteichoic acid (LTA), the activation of D-alanine and its transfer onto the D-alanyl carrier protein (Dcp) DltC. In an ATP-dependent two-step reaction, forms a high energy D-alanyl-AMP intermediate, followed by transfer of the D-alanyl residue as a thiol ester to the phosphopantheinyl prosthetic group of the Dcp. D-alanylation of LTA plays an important role in modulating the properties of the cell wall in Gram-positive bacteria, influencing the net charge of the cell wall. The sequence is that of D-alanine--D-alanyl carrier protein ligase from Listeria welshimeri serovar 6b (strain ATCC 35897 / DSM 20650 / CCUG 15529 / CIP 8149 / NCTC 11857 / SLCC 5334 / V8).